Reading from the N-terminus, the 174-residue chain is KELLDSDGDILRNGGTYYILPALRGKGGGLELAKTGDETCPLNVVQARGETKRGRPAIIWTPPRIAILTPAFYLNIEFQTKDLPACLREYSRLPREEEQHSEVKLAPKEEAAAFGXEKLKPYRDDYKIVYCEGGSDDDSCKDLGISIDDENNRRLVVKDGDPLAVRFVKAHRRG.

2 disulfides stabilise this stretch: Cys-40-Cys-86 and Cys-131-Cys-140.

The protein belongs to the protease inhibitor I3 (leguminous Kunitz-type inhibitor) family. Heterodimer of an alpha and a beta chain linked by a disulfide bond.

In terms of biological role, inhibits trypsin and chymotrypsin with a 1:1 stoichiometry, with dissociation constants of 1.56 nM and 120 nM respectively. Inhibits plasma kallikrein, factor XIIa and plasmin with dissociation constants of 5.0 nM, 150 nM and 18 nM respectively. Does not inhibit factor Xa, thrombin, tissue kallikrein or cysteine proteinases such as papain and bromelain. The sequence is that of Trypsin inhibitor from Enterolobium contortisiliquum (Pacara earpod tree).